Reading from the N-terminus, the 124-residue chain is Histone H2B 1/2 (124 aa).

The tract at residues 1 to 32 (MPEPAKAAPKKGSKKAVTKTAGKGGKKRKRTR) is disordered. N6-acetyllysine occurs at positions 6 and 11. The segment covering 8-17 (APKKGSKKAV) has biased composition (basic residues). A Phosphoserine modification is found at serine 13. N6-acetyllysine is present on residues lysine 14 and lysine 19. An O-linked (GlcNAc) serine glycan is attached at serine 111. Lysine 119 participates in a covalent cross-link: Glycyl lysine isopeptide (Lys-Gly) (interchain with G-Cter in ubiquitin).

This sequence belongs to the histone H2B family. As to quaternary structure, the nucleosome is a histone octamer containing two molecules each of H2A, H2B, H3 and H4 assembled in one H3-H4 heterotetramer and two H2A-H2B heterodimers. The octamer wraps approximately 147 bp of DNA. In terms of processing, monoubiquitination of Lys-119 by the BRE1 gives a specific tag for epigenetic transcriptional activation and is also prerequisite for histone H3 'Lys-4' and 'Lys-79' methylation. Post-translationally, phosphorylated during apoptosis; which facilitates apoptotic chromatin condensation. GlcNAcylation at Ser-111 promotes monoubiquitination of Lys-119. It fluctuates in response to extracellular glucose, and associates with transcribed genes.

Its subcellular location is the nucleus. It localises to the chromosome. Functionally, core component of nucleosome. Nucleosomes wrap and compact DNA into chromatin, limiting DNA accessibility to the cellular machineries which require DNA as a template. Histones thereby play a central role in transcription regulation, DNA repair, DNA replication and chromosomal stability. DNA accessibility is regulated via a complex set of post-translational modifications of histones, also called histone code, and nucleosome remodeling. The protein is Histone H2B 1/2 of Danio rerio (Zebrafish).